A 473-amino-acid chain; its full sequence is Venom prothrombin activator vestarin-D1 (473 aa).

Positions 1–20 (MAPQLLLCLIQTFLWSLPEA) are cleaved as a signal peptide. A propeptide spanning residues 21 to 40 (ESNVFLKSNVANRFLQRTKR) is cleaved from the precursor. The region spanning 41–86 (ANSGFEEIYPANFERECVEERCSKEEAREVFEDDEKTEAFWTVYVD) is the Gla domain. Glu46, Glu47, Glu54, Glu56, Glu59, Glu60, Glu65, Glu66, Glu69, Glu72, and Glu75 each carry 4-carboxyglutamate. A disulfide bridge connects residues Cys57 and Cys62. In terms of domain architecture, EGF-like 1; calcium-binding spans 86–122 (DGDQCLSNPCHYGGTCKDGIGSYTCTCLAGYEGKNCE). Disulfide bonds link Cys90/Cys101, Cys95/Cys110, Cys112/Cys121, Cys129/Cys140, Cys136/Cys149, Cys151/Cys164, Cys172/Cys335, Cys235/Cys240, Cys383/Cys397, and Cys408/Cys436. A glycan (O-linked (Hex...) serine) is linked at Ser92. Positions 129–164 (CRVDNGNCWHFCKPVQNDTQCSCAEGYRLGDNGFSC) constitute an EGF-like 2 domain. A propeptide spans 182 to 228 (REASLPDFQTDFSDDYDAIDENNLIETVQSQSATLLKKSDNPNPDIR) (activation peptide). The Peptidase S1 domain maps to 229-460 (IVNGLDCKLG…FLPWIKTIMR (232 aa)). The active-site Charge relay system is the His270. A glycan (N-linked (GlcNAc...) asparagine) is linked at Asn273. Catalysis depends on Asp315, which acts as the Charge relay system. The active-site Charge relay system is Ser412.

This sequence belongs to the peptidase S1 family. Snake venom subfamily. As to quaternary structure, heterodimer of a light chain and a heavy chain; disulfide-linked. In terms of processing, the vitamin K-dependent, enzymatic carboxylation of some glutamate residues allows the modified protein to bind calcium. As to expression, expressed by the venom gland.

The protein resides in the secreted. The enzyme catalyses Selective cleavage of Arg-|-Thr and then Arg-|-Ile bonds in prothrombin to form thrombin.. Snake prothrombin activator that attacks the hemostatic system of prey. This protein is functionally similar to blood coagulation factor Xa. In Demansia vestigiata (Lesser black whip snake), this protein is Venom prothrombin activator vestarin-D1.